Consider the following 127-residue polypeptide: NADPH-dependent 7-cyano-7-deazaguanine reductase (127 aa).

The active-site Thioimide intermediate is cysteine 40. The active-site Proton donor is the aspartate 47. Substrate is bound by residues 62 to 64 (VEL) and 81 to 82 (HE).

This sequence belongs to the GTP cyclohydrolase I family. QueF type 1 subfamily.

The protein resides in the cytoplasm. The enzyme catalyses 7-aminomethyl-7-carbaguanine + 2 NADP(+) = 7-cyano-7-deazaguanine + 2 NADPH + 3 H(+). It functions in the pathway tRNA modification; tRNA-queuosine biosynthesis. In terms of biological role, catalyzes the NADPH-dependent reduction of 7-cyano-7-deazaguanine (preQ0) to 7-aminomethyl-7-deazaguanine (preQ1). The sequence is that of NADPH-dependent 7-cyano-7-deazaguanine reductase from Campylobacter lari (strain RM2100 / D67 / ATCC BAA-1060).